We begin with the raw amino-acid sequence, 501 residues long: NAD(P)H-quinone oxidoreductase subunit 2, chloroplastic (501 aa).

A run of 14 helical transmembrane segments spans residues 15 to 35 (ILPE…DLIL), 42 to 62 (VFFF…IFQL), 82 to 102 (IFRI…IDFI), 107 to 127 (LAIT…MFLC), 132 to 152 (LITI…LSGY), 167 to 187 (LLIG…LYGL), 210 to 230 (FGSL…LSLV), 244 to 264 (PTPV…ALLV), 278 to 298 (WHSL…LVAI), 307 to 327 (LAYS…TGNF), 334 to 354 (IVYL…IILF), 378 to 398 (FSLA…GFFG), 410 to 430 (GLYF…YYYL), and 466 to 486 (VSII…NPII).

This sequence belongs to the complex I subunit 2 family. In terms of assembly, NDH is composed of at least 16 different subunits, 5 of which are encoded in the nucleus.

It is found in the plastid. It localises to the chloroplast thylakoid membrane. The enzyme catalyses a plastoquinone + NADH + (n+1) H(+)(in) = a plastoquinol + NAD(+) + n H(+)(out). The catalysed reaction is a plastoquinone + NADPH + (n+1) H(+)(in) = a plastoquinol + NADP(+) + n H(+)(out). Its function is as follows. NDH shuttles electrons from NAD(P)H:plastoquinone, via FMN and iron-sulfur (Fe-S) centers, to quinones in the photosynthetic chain and possibly in a chloroplast respiratory chain. The immediate electron acceptor for the enzyme in this species is believed to be plastoquinone. Couples the redox reaction to proton translocation, and thus conserves the redox energy in a proton gradient. This chain is NAD(P)H-quinone oxidoreductase subunit 2, chloroplastic, found in Physcomitrium patens (Spreading-leaved earth moss).